The chain runs to 190 residues: Dynein axonemal light chain 1 (190 aa).

At Ala2 the chain carries N-acetylalanine. LRR repeat units follow at residues 49–70 (NCEKLSLSTNCIEKIANLNGLK), 71–92 (NLRILSLGRNNIKNLNGLEAVG), 94–115 (TLEELWISYNFIEKLKGIHIMK), and 116–137 (KLKILYMSNNLVKDWAEFVKLA). Position 56 is a phosphoserine (Ser56). Positions 150 to 190 (NPLEEKHSAENNWIEEATKRVPKLKKLDGTPVIKGDEEEDN) constitute an LRRCT domain.

The protein belongs to the dynein light chain LC1-type family. Interacts with ZMYND10 (via C-terminus). Interacts with DNAH5, a outer arm dynein heavy chain. Interacts with tubulin located within the A-tubule of the outer doublets in a ATP-independent manner. In terms of tissue distribution, expressed in tissues carrying motile cilia such as respiratory epithelia, ependyma and testis.

The protein localises to the cytoplasm. Its subcellular location is the cytoskeleton. The protein resides in the cilium axoneme. Its function is as follows. Part of the multisubunit axonemal ATPase complexes that generate the force for cilia motility and govern beat frequency. Component of the outer arm dynein (ODA). May be involved in a mechanosensory feedback mechanism controlling ODA activity based on external conformational cues by tethering the outer arm dynein heavy chain (DNAH5) to the microtubule within the axoneme. Important for ciliary function in the airways and for the function of the cilia that produce the nodal flow essential for the determination of the left-right asymmetry. This chain is Dynein axonemal light chain 1, found in Homo sapiens (Human).